The chain runs to 79 residues: Large ribosomal subunit protein bL28 (79 aa).

Positions 1 to 26 (MAKVCQVTGKRPQSGNNVSHANKKTN) are disordered. Polar residues predominate over residues 11 to 20 (RPQSGNNVSH).

Belongs to the bacterial ribosomal protein bL28 family.

In Coxiella burnetii (strain CbuK_Q154) (Coxiella burnetii (strain Q154)), this protein is Large ribosomal subunit protein bL28.